The sequence spans 597 residues: NADPH-dependent diflavin oxidoreductase 1 (597 aa).

The region spanning 6–150 is the Flavodoxin-like domain; that stretch reads LLVLFGSQTG…AIDPWLQDLW (145 aa). FMN contacts are provided by residues 12-17, 59-62, 97-106, and Asp132; these read SQTGTA, ATTG, and LGDSSYAKFN. The region spanning 206–446 is the FAD-binding FR-type domain; sequence LQPFLAPMVS…WVRSGGLTFP (241 aa). FAD-binding positions include Arg350, 382-385, and 416-419; these read RAFS and GLCS. Residues Thr460, 515-516, 521-525, and Asp558 contribute to the NADP(+) site; these read SR and KVYVQ. Trp596 provides a ligand contact to FAD.

Belongs to the NADPH-dependent diflavin oxidoreductase NDOR1 family. This sequence in the N-terminal section; belongs to the flavodoxin family. It in the C-terminal section; belongs to the flavoprotein pyridine nucleotide cytochrome reductase family. Interacts with CIAPIN1; as part of the cytosolic iron-sulfur (Fe-S) protein assembly (CIA) machinery. Interacts with DCPS. FAD serves as cofactor. It depends on FMN as a cofactor.

It is found in the cytoplasm. The protein localises to the perinuclear region. It carries out the reaction 2 oxidized [2Fe-2S]-[protein] + NADPH = 2 reduced [2Fe-2S]-[protein] + NADP(+) + H(+). NADPH-dependent reductase which is a central component of the cytosolic iron-sulfur (Fe-S) protein assembly (CIA) machinery. Transfers electrons from NADPH via its FAD and FMN prosthetic groups to the [2Fe-2S] cluster of CIAPIN1, another key component of the CIA machinery. In turn, this reduced cluster provides electrons for assembly of cytosolic iron-sulfur cluster proteins. It can also reduce the [2Fe-2S] cluster of CISD1 and activate this protein implicated in Fe/S cluster repair. In vitro can fully activate methionine synthase/MTR in the presence of soluble cytochrome b5/CYB5A. The sequence is that of NADPH-dependent diflavin oxidoreductase 1 from Bos taurus (Bovine).